The sequence spans 253 residues: 3-dehydroquinate dehydratase (253 aa).

Residues 46-48 (EFR) and R82 each bind 3-dehydroquinate. Catalysis depends on H143, which acts as the Proton donor/acceptor. K170 acts as the Schiff-base intermediate with substrate in catalysis. The 3-dehydroquinate site is built by R213, S232, and Q236.

This sequence belongs to the type-I 3-dehydroquinase family. Homodimer.

It carries out the reaction 3-dehydroquinate = 3-dehydroshikimate + H2O. It participates in metabolic intermediate biosynthesis; chorismate biosynthesis; chorismate from D-erythrose 4-phosphate and phosphoenolpyruvate: step 3/7. Involved in the third step of the chorismate pathway, which leads to the biosynthesis of aromatic amino acids. Catalyzes the cis-dehydration of 3-dehydroquinate (DHQ) and introduces the first double bond of the aromatic ring to yield 3-dehydroshikimate. The chain is 3-dehydroquinate dehydratase from Clostridium novyi (strain NT).